The sequence spans 373 residues: tRNA-specific 2-thiouridylase MnmA (373 aa).

ATP contacts are provided by residues 12 to 19 (GMSGGVDS) and M38. The interaction with target base in tRNA stretch occupies residues 98–100 (NPD). C103 serves as the catalytic Nucleophile. An intrachain disulfide couples C103 to C200. G127 contacts ATP. The interaction with tRNA stretch occupies residues 150 to 152 (KDQ). The Cysteine persulfide intermediate role is filled by C200. Residues 312–313 (RY) are interaction with tRNA.

Belongs to the MnmA/TRMU family.

It is found in the cytoplasm. It catalyses the reaction S-sulfanyl-L-cysteinyl-[protein] + uridine(34) in tRNA + AH2 + ATP = 2-thiouridine(34) in tRNA + L-cysteinyl-[protein] + A + AMP + diphosphate + H(+). Catalyzes the 2-thiolation of uridine at the wobble position (U34) of tRNA, leading to the formation of s(2)U34. This Streptococcus pneumoniae (strain ATCC BAA-255 / R6) protein is tRNA-specific 2-thiouridylase MnmA.